The primary structure comprises 457 residues: 3-isopropylmalate dehydratase large subunit (457 aa).

Residues Cys337, Cys397, and Cys400 each coordinate [4Fe-4S] cluster.

It belongs to the aconitase/IPM isomerase family. LeuC type 1 subfamily. In terms of assembly, heterodimer of LeuC and LeuD. Requires [4Fe-4S] cluster as cofactor.

It catalyses the reaction (2R,3S)-3-isopropylmalate = (2S)-2-isopropylmalate. It functions in the pathway amino-acid biosynthesis; L-leucine biosynthesis; L-leucine from 3-methyl-2-oxobutanoate: step 2/4. In terms of biological role, catalyzes the isomerization between 2-isopropylmalate and 3-isopropylmalate, via the formation of 2-isopropylmaleate. In Oenococcus oeni (strain ATCC BAA-331 / PSU-1), this protein is 3-isopropylmalate dehydratase large subunit.